A 186-amino-acid chain; its full sequence is Protein YABBY 2 (186 aa).

A C4-type zinc finger spans residues 17–44; it reads CNFCNTIFAVSVPSNSMLNIVTVRCGHC.

The protein belongs to the YABBY family. In terms of tissue distribution, expressed in leaf blades, leaf sheaths and flowers.

The protein resides in the nucleus. This Oryza sativa subsp. japonica (Rice) protein is Protein YABBY 2 (YAB2).